A 153-amino-acid polypeptide reads, in one-letter code: 6,7-dimethyl-8-ribityllumazine synthase (153 aa).

5-amino-6-(D-ribitylamino)uracil is bound by residues Phe-21, 55-57, and 79-81; these read AFE and TVI. 84–85 contributes to the (2S)-2-hydroxy-3-oxobutyl phosphate binding site; the sequence is AT. His-87 acts as the Proton donor in catalysis. 5-amino-6-(D-ribitylamino)uracil is bound at residue Phe-112. Residue Arg-126 participates in (2S)-2-hydroxy-3-oxobutyl phosphate binding.

Belongs to the DMRL synthase family. Forms an icosahedral capsid composed of 60 subunits, arranged as a dodecamer of pentamers.

The catalysed reaction is (2S)-2-hydroxy-3-oxobutyl phosphate + 5-amino-6-(D-ribitylamino)uracil = 6,7-dimethyl-8-(1-D-ribityl)lumazine + phosphate + 2 H2O + H(+). It participates in cofactor biosynthesis; riboflavin biosynthesis; riboflavin from 2-hydroxy-3-oxobutyl phosphate and 5-amino-6-(D-ribitylamino)uracil: step 1/2. Catalyzes the formation of 6,7-dimethyl-8-ribityllumazine by condensation of 5-amino-6-(D-ribitylamino)uracil with 3,4-dihydroxy-2-butanone 4-phosphate. This is the penultimate step in the biosynthesis of riboflavin. In Bacillus cereus (strain G9842), this protein is 6,7-dimethyl-8-ribityllumazine synthase.